The following is a 405-amino-acid chain: Acetate kinase (405 aa).

Residue Asn7 participates in Mg(2+) binding. Residue Lys14 participates in ATP binding. Arg91 provides a ligand contact to substrate. The active-site Proton donor/acceptor is Asp148. ATP contacts are provided by residues 208-212 and 283-285; these read HLGNG and DFR. Glu384 provides a ligand contact to Mg(2+).

It belongs to the acetokinase family. As to quaternary structure, homodimer. Mg(2+) is required as a cofactor. Mn(2+) serves as cofactor.

The protein resides in the cytoplasm. The enzyme catalyses acetate + ATP = acetyl phosphate + ADP. The protein operates within metabolic intermediate biosynthesis; acetyl-CoA biosynthesis; acetyl-CoA from acetate: step 1/2. Its function is as follows. Catalyzes the formation of acetyl phosphate from acetate and ATP. Can also catalyze the reverse reaction. The protein is Acetate kinase of Dictyoglomus turgidum (strain DSM 6724 / Z-1310).